Consider the following 501-residue polypeptide: Bifunctional pantoate ligase/cytidylate kinase (501 aa).

The segment at Met1–Ser264 is pantoate--beta-alanine ligase. Residue Met25–His32 coordinates ATP. The active-site Proton donor is the His32. Position 55 (Gln55) interacts with (R)-pantoate. A beta-alanine-binding site is contributed by Gln55. An ATP-binding site is contributed by Gly144–Asp147. Residue Gln150 participates in (R)-pantoate binding. ATP is bound by residues Val173 and Leu181 to Arg184. The segment at Phe265–Gly501 is cytidylate kinase.

The protein in the N-terminal section; belongs to the pantothenate synthetase family. This sequence in the C-terminal section; belongs to the cytidylate kinase family. Type 1 subfamily.

It is found in the cytoplasm. The enzyme catalyses (R)-pantoate + beta-alanine + ATP = (R)-pantothenate + AMP + diphosphate + H(+). It carries out the reaction CMP + ATP = CDP + ADP. The catalysed reaction is dCMP + ATP = dCDP + ADP. The protein operates within cofactor biosynthesis; (R)-pantothenate biosynthesis; (R)-pantothenate from (R)-pantoate and beta-alanine: step 1/1. Catalyzes the condensation of pantoate with beta-alanine in an ATP-dependent reaction via a pantoyl-adenylate intermediate. Its function is as follows. Catalyzes the transfer of a phosphate group from ATP to either CMP or dCMP to form CDP or dCDP and ADP, respectively. The protein is Bifunctional pantoate ligase/cytidylate kinase of Parasynechococcus marenigrum (strain WH8102).